Here is a 422-residue protein sequence, read N- to C-terminus: Glucose-1-phosphate adenylyltransferase (422 aa).

Alpha-D-glucose 1-phosphate is bound by residues Tyr-110, Gly-175, 190–191 (EK), and Ser-208.

It belongs to the bacterial/plant glucose-1-phosphate adenylyltransferase family. Homotetramer.

It catalyses the reaction alpha-D-glucose 1-phosphate + ATP + H(+) = ADP-alpha-D-glucose + diphosphate. It functions in the pathway glycan biosynthesis; glycogen biosynthesis. Involved in the biosynthesis of ADP-glucose, a building block required for the elongation reactions to produce glycogen. Catalyzes the reaction between ATP and alpha-D-glucose 1-phosphate (G1P) to produce pyrophosphate and ADP-Glc. This Hydrogenovibrio crunogenus (strain DSM 25203 / XCL-2) (Thiomicrospira crunogena) protein is Glucose-1-phosphate adenylyltransferase.